The chain runs to 244 residues: LOB domain-containing protein 17 (244 aa).

Residues 6–108 (SPCGACKFLR…TQLEILKQQA (103 aa)) form the LOB domain.

This sequence belongs to the LOB domain-containing protein family. As to expression, expressed in roots, stems, leaves and flowers.

This Arabidopsis thaliana (Mouse-ear cress) protein is LOB domain-containing protein 17 (LBD17).